Consider the following 393-residue polypeptide: Chalcone synthase (393 aa).

Residue Cys-164 is part of the active site.

The protein belongs to the thiolase-like superfamily. Chalcone/stilbene synthases family.

The catalysed reaction is (E)-4-coumaroyl-CoA + 3 malonyl-CoA + 3 H(+) = 2',4,4',6'-tetrahydroxychalcone + 3 CO2 + 4 CoA. It participates in secondary metabolite biosynthesis; flavonoid biosynthesis. The primary product of this enzyme is 4,2',4',6'-tetrahydroxychalcone (also termed naringenin-chalcone or chalcone) which can under specific conditions spontaneously isomerize into naringenin. This Vitis vinifera (Grape) protein is Chalcone synthase (CHS).